Reading from the N-terminus, the 709-residue chain is Polyribonucleotide nucleotidyltransferase (709 aa).

Mg(2+) is bound by residues Asp-490 and Asp-496. In terms of domain architecture, KH spans 557-616 (PKVITMRVLPEKIPVIIGPSGKNIKKIIDETGVKIDLDQEGLVRIYAVDGESADKAKEMI). The S1 motif domain maps to 626–694 (GEVYMGKVTR…EMGRAKVSLK (69 aa)).

Belongs to the polyribonucleotide nucleotidyltransferase family. It depends on Mg(2+) as a cofactor.

Its subcellular location is the cytoplasm. The catalysed reaction is RNA(n+1) + phosphate = RNA(n) + a ribonucleoside 5'-diphosphate. In terms of biological role, involved in mRNA degradation. Catalyzes the phosphorolysis of single-stranded polyribonucleotides processively in the 3'- to 5'-direction. This is Polyribonucleotide nucleotidyltransferase from Persephonella marina (strain DSM 14350 / EX-H1).